Here is a 239-residue protein sequence, read N- to C-terminus: Glandular kallikrein, prostatic (239 aa).

Positions valine 1–alanine 236 constitute a Peptidase S1 domain. Disulfide bonds link cysteine 7–cysteine 151, cysteine 26–cysteine 42, cysteine 128–cysteine 197, cysteine 162–cysteine 176, and cysteine 187–cysteine 212. Catalysis depends on histidine 41, which acts as the Charge relay system. An N-linked (GlcNAc...) asparagine glycan is attached at asparagine 78. Aspartate 96 functions as the Charge relay system in the catalytic mechanism. An N-linked (GlcNAc...) asparagine glycan is attached at asparagine 169. Residue serine 191 is the Charge relay system of the active site.

The protein belongs to the peptidase S1 family. Kallikrein subfamily.

The enzyme catalyses Preferential cleavage of Arg-|-Xaa bonds in small molecule substrates. Highly selective action to release kallidin (lysyl-bradykinin) from kininogen involves hydrolysis of Met-|-Xaa or Leu-|-Xaa.. In terms of biological role, glandular kallikreins cleave Met-Lys and Arg-Ser bonds in kininogen to release Lys-bradykinin. The polypeptide is Glandular kallikrein, prostatic (Cavia porcellus (Guinea pig)).